Consider the following 162-residue polypeptide: Proepiregulin (162 aa).

An N-terminal signal peptide occupies residues 1–22 (METLPASWVLTLLCLGSHLLQA). The propeptide occupies 23 to 55 (VISTTVIPSCIPGESEDNCTALVQMEDDPRVAQ). Asn-40 carries an N-linked (GlcNAc...) asparagine glycan. The Extracellular segment spans residues 53–112 (VAQVQITKCSSDMDGYCLHGQCIYLVDMREKFCRCEVGYTGLRCEHFFLTVHQPLSKEYV). Residues 57-97 (QITKCSSDMDGYCLHGQCIYLVDMREKFCRCEVGYTGLRCE) form the EGF-like domain. 3 disulfide bridges follow: Cys-61–Cys-74, Cys-69–Cys-85, and Cys-87–Cys-96. The propeptide at 102-162 (TVHQPLSKEY…TSGDPVLPQV (61 aa)) is removed in mature form. A helical membrane pass occupies residues 113 to 133 (ALTVILIFLFLIITAGCIYYF). Residues 134 to 162 (CRWYKNRKSKKSREEYERVTSGDPVLPQV) are Cytoplasmic-facing.

As to quaternary structure, interacts with EGFR and ERBB4.

It localises to the secreted. It is found in the extracellular space. Its subcellular location is the cell membrane. Functionally, ligand of the EGF receptor/EGFR and ERBB4. Stimulates EGFR and ERBB4 tyrosine phosphorylation. Contributes to inflammation, wound healing, tissue repair, and oocyte maturation by regulating angiogenesis and vascular remodeling and by stimulating cell proliferation. The polypeptide is Proepiregulin (Ereg) (Mus musculus (Mouse)).